The chain runs to 144 residues: Large ribosomal subunit protein uL13 (144 aa).

This sequence belongs to the universal ribosomal protein uL13 family. As to quaternary structure, part of the 50S ribosomal subunit.

Its function is as follows. This protein is one of the early assembly proteins of the 50S ribosomal subunit, although it is not seen to bind rRNA by itself. It is important during the early stages of 50S assembly. In Mycoplasmopsis agalactiae (strain NCTC 10123 / CIP 59.7 / PG2) (Mycoplasma agalactiae), this protein is Large ribosomal subunit protein uL13.